Here is a 758-residue protein sequence, read N- to C-terminus: 5-methyltetrahydropteroyltriglutamate--homocysteine methyltransferase (758 aa).

Residues 16–19 (RELK) and Lys112 contribute to the 5-methyltetrahydropteroyltri-L-glutamate site. Residues 433 to 435 (IGS) and Glu486 contribute to the L-homocysteine site. L-methionine is bound by residues 433-435 (IGS) and Glu486. 5-methyltetrahydropteroyltri-L-glutamate contacts are provided by residues 517–518 (RC) and Trp563. Position 601 (Asp601) interacts with L-homocysteine. Asp601 serves as a coordination point for L-methionine. Glu607 contacts 5-methyltetrahydropteroyltri-L-glutamate. Zn(2+)-binding residues include His643, Cys645, and Glu667. The active-site Proton donor is His696. Cys728 serves as a coordination point for Zn(2+).

The protein belongs to the vitamin-B12 independent methionine synthase family. Zn(2+) serves as cofactor.

It carries out the reaction 5-methyltetrahydropteroyltri-L-glutamate + L-homocysteine = tetrahydropteroyltri-L-glutamate + L-methionine. Its pathway is amino-acid biosynthesis; L-methionine biosynthesis via de novo pathway; L-methionine from L-homocysteine (MetE route): step 1/1. In terms of biological role, catalyzes the transfer of a methyl group from 5-methyltetrahydrofolate to homocysteine resulting in methionine formation. This chain is 5-methyltetrahydropteroyltriglutamate--homocysteine methyltransferase, found in Neisseria meningitidis serogroup B (strain ATCC BAA-335 / MC58).